The primary structure comprises 184 residues: Succinate dehydrogenase cytochrome b560 subunit, mitochondrial (184 aa).

The helical transmembrane segment at 65–94 threads the bilayer; it reads LTWMLSGFHRISGCVMAGTLLVGGLGFAVL. At 95 to 114 the chain is on the mitochondrial intermembrane side; sequence PLDFTTFVEYIRGWNLPCAV. A helical transmembrane segment spans residues 115–139; it reads TAVFKYIIAFPIIFHTLNGIRFLGF. A heme-binding site is contributed by histidine 129. The Mitochondrial matrix portion of the chain corresponds to 140–147; sequence DLAKGVDN. Residues 148 to 169 traverse the membrane as a helical segment; the sequence is IGQVYKSGWLVFGVSAVIALAI. Over 170–172 the chain is Mitochondrial intermembrane; it reads VIN.

The protein belongs to the cytochrome b560 family. Component of complex II composed of four subunits: a flavoprotein (FP), iron-sulfur protein (IP), and a cytochrome b560 composed of two transmembrane proteins. Heme is required as a cofactor.

The protein localises to the mitochondrion inner membrane. The protein operates within carbohydrate metabolism; tricarboxylic acid cycle. Membrane-anchoring subunit of succinate dehydrogenase (SDH) that is involved in complex II of the mitochondrial electron transport chain and is responsible for transferring electrons from succinate to ubiquinone (coenzyme Q). Mediates resistance to enteropathogenic E.coli infection. The sequence is that of Succinate dehydrogenase cytochrome b560 subunit, mitochondrial (mev-1) from Caenorhabditis briggsae.